The chain runs to 745 residues: Bacteriophage N4 adsorption protein B (745 aa).

Helical transmembrane passes span 8-28 (FATW…IMFI), 362-382 (ISNF…LLLA), and 393-413 (FLSI…NFGL).

It localises to the cell inner membrane. In terms of biological role, required for bacteriophage N4 adsorption. May be a component of the phage receptor. This is Bacteriophage N4 adsorption protein B (nfrB) from Escherichia coli O157:H7.